Here is a 354-residue protein sequence, read N- to C-terminus: Ornithine carbamoyltransferase, catabolic (354 aa).

Carbamoyl phosphate contacts are provided by residues 67–70 (STRT), Q94, R118, and 145–148 (HPTQ). L-ornithine is bound by residues N177, D241, and 245–246 (SM). Residues 284–285 (CL) and R329 contribute to the carbamoyl phosphate site.

Belongs to the aspartate/ornithine carbamoyltransferase superfamily. OTCase family.

It is found in the cytoplasm. It carries out the reaction carbamoyl phosphate + L-ornithine = L-citrulline + phosphate + H(+). Its pathway is amino-acid degradation; L-arginine degradation via ADI pathway; carbamoyl phosphate from L-arginine: step 2/2. In terms of biological role, reversibly catalyzes the transfer of the carbamoyl group from carbamoyl phosphate (CP) to the N(epsilon) atom of ornithine (ORN) to produce L-citrulline. The sequence is that of Ornithine carbamoyltransferase, catabolic (arcB) from Lactococcus lactis subsp. cremoris (Streptococcus cremoris).